The sequence spans 781 residues: MAP7 domain-containing protein 2 (781 aa).

The span at 1–32 (MERSGGNGGGGGGGGGGGGGYGGSGGGGGGAG) shows a compositional bias: gly residues. Disordered regions lie at residues 1–37 (MERSGGNGGGGGGGGGGGGGYGGSGGGGGGAGVPSEG), 50–87 (AEAASGRASQSTPRSAGMDGFLKSDERQRLAKERREER), 120–567 (LEEQ…AAKQ), and 597–628 (TRKSDASLEVKKEDPKVELQPPPDVENKANKA). Basic and acidic residues-rich tracts occupy residues 71-87 (LKSDERQRLAKERREER) and 120-158 (LEEQRQREDQKRAAVEEKRKQKLREEEERLEAMMRRSLE). Residues 73 to 168 (SDERQRLAKE…RTQQLELKKK (96 aa)) are a coiled coil. The segment covering 192 to 210 (LTLATSTPPLDTGTTTAAA) has biased composition (low complexity). Polar residues-rich tracts occupy residues 211–245 (ESTNACDKLSTSTMNLPKQTESPMSKHLSSSTVAI) and 257–267 (LKSSYKSSPTR). Basic and acidic residues predominate over residues 318–328 (RRCEPPEDISK). Over residues 329–348 (RLSSPVKSKITSKTYPQSPK) the composition is skewed to polar residues. 4 stretches are compositionally biased toward basic and acidic residues: residues 370-387 (ETPKKKAEKEKRNKEKEG), 397-436 (PREESLEKRMADKYATEKYVADKHATEKHSAPGGKAEHSA), 453-567 (LAEK…AAKQ), and 597-613 (TRKSDASLEVKKEDPKV).

It belongs to the MAP7 family. Interacts (via N-terminus) with microtubules; facilitates microtubule stabilization. Interacts with kinesin-1 family members, KIF5A, KIF5B and KIF5C. In terms of tissue distribution, expressed predominantly in the glomerular layer of the olfactory bulb and Sertoli cells of the testis.

Its subcellular location is the cytoplasm. It localises to the cytoskeleton. The protein resides in the microtubule organizing center. The protein localises to the centrosome. It is found in the midbody. Its subcellular location is the cell projection. It localises to the neuron projection. The protein resides in the axon. Functionally, microtubule-stabilizing protein involved in the control of cell motility and neurite outgrowth. Acts as a critical cofactor for kinesin transport; in the proximal axon regulates kinesin-1 family members, KIF5A, KIF5B and KIF5C recruitment to microtubules and contributes to kinesin-1-mediated transport in the axons. In Mus musculus (Mouse), this protein is MAP7 domain-containing protein 2 (Map7d2).